Here is a 96-residue protein sequence, read N- to C-terminus: Large ribosomal subunit protein bL25 (96 aa).

The protein belongs to the bacterial ribosomal protein bL25 family. As to quaternary structure, part of the 50S ribosomal subunit; part of the 5S rRNA/L5/L18/L25 subcomplex. Contacts the 5S rRNA. Binds to the 5S rRNA independently of L5 and L18.

Functionally, this is one of the proteins that binds to the 5S RNA in the ribosome where it forms part of the central protuberance. In Francisella tularensis subsp. holarctica (strain FTNF002-00 / FTA), this protein is Large ribosomal subunit protein bL25.